Consider the following 246-residue polypeptide: tRNA (guanine-N(7)-)-methyltransferase (246 aa).

The S-adenosyl-L-methionine site is built by Glu76, Glu101, Asp128, and Asp151. Residue Asp151 is part of the active site. A substrate-binding site is contributed by Lys155. The tract at residues 157-162 (RHNKRR) is interaction with RNA. Substrate-binding positions include Asp187 and 222 to 225 (TKFE).

Belongs to the class I-like SAM-binding methyltransferase superfamily. TrmB family.

The catalysed reaction is guanosine(46) in tRNA + S-adenosyl-L-methionine = N(7)-methylguanosine(46) in tRNA + S-adenosyl-L-homocysteine. It functions in the pathway tRNA modification; N(7)-methylguanine-tRNA biosynthesis. Catalyzes the formation of N(7)-methylguanine at position 46 (m7G46) in tRNA. The sequence is that of tRNA (guanine-N(7)-)-methyltransferase from Dechloromonas aromatica (strain RCB).